Here is a 109-residue protein sequence, read N- to C-terminus: Transcription initiation factor IIA subunit 2 (109 aa).

The protein belongs to the TFIIA subunit 2 family. As to quaternary structure, TFIIA is a heterodimer of the large unprocessed subunit 1 and a small subunit gamma. It was originally believed to be a heterotrimer of an alpha (p35), a beta (p19) and a gamma subunit (p12). Interacts with NCOA6 general coactivator. TFIIA forms a complex with TBP. Interacts with HSF1 (via transactivation domain). Part of TBP-based Pol II pre-initiation complex (PIC), in which Pol II core assembles with general transcription factors and other specific initiation factors including GTF2E1, GTF2E2, GTF2F1, GTF2F2, TCEA1, ERCC2, ERCC3, GTF2H2, GTF2H3, GTF2H4, GTF2H5, GTF2A1, GTF2A2, GTF2B and TBP; this large multi-subunit PIC complex mediates DNA unwinding and targets Pol II core to the transcription start site where the first phosphodiester bond forms. (Microbial infection) Interacts with SV40 Large T antigen.

Its subcellular location is the nucleus. TFIIA is a component of the transcription machinery of RNA polymerase II and plays an important role in transcriptional activation. TFIIA in a complex with TBP mediates transcriptional activity. In Homo sapiens (Human), this protein is Transcription initiation factor IIA subunit 2 (GTF2A2).